Reading from the N-terminus, the 429-residue chain is MTQLLKAKEGVITREMEVVAAEERKSPEEIRQKVALGEVVIPANVNHQNLHPKGIGAGLKVKVNANLGTSENRCFYEDELKKVKVAIKAGADAIMDLSTGGNLDEIRRAIIKESSVPVGTVPLYQAAAETLNKYGDISRLDPELLFDVIEKQAADGVDFMTVHVGVTREILKVLDRFPRVTEVVSRGGSLTIAWMEKNGRENPLYEQFDRLLAICRKYDVTLSLGDGLRPGSIADATDQLQIMELMKLGELVKYAQNQGVQVMVEGPGHVPINQIEMNVKLMKRLCANAPFYVLGPLVTDIAPGYDHITAAIGGAWAAYFGADFLCYVTPAEHLGLPTVEDVEEGVIALKIAAHAADLARGNREAWNRDYEMSVARKELNWERQFELAINPERARKMRIERGSQDIKSCSMCGELCAMKIMNERGGKNA.

Substrate contacts are provided by residues N66, M95, Y124, H163, 185–187 (SRG), 226–229 (DGLR), and E265. H269 contributes to the Zn(2+) binding site. Substrate is bound at residue Y292. Residue H333 participates in Zn(2+) binding. C409, C412, and C416 together coordinate [4Fe-4S] cluster.

It belongs to the ThiC family. [4Fe-4S] cluster serves as cofactor.

It catalyses the reaction 5-amino-1-(5-phospho-beta-D-ribosyl)imidazole + S-adenosyl-L-methionine = 4-amino-2-methyl-5-(phosphooxymethyl)pyrimidine + CO + 5'-deoxyadenosine + formate + L-methionine + 3 H(+). The protein operates within cofactor biosynthesis; thiamine diphosphate biosynthesis. In terms of biological role, catalyzes the synthesis of the hydroxymethylpyrimidine phosphate (HMP-P) moiety of thiamine from aminoimidazole ribotide (AIR) in a radical S-adenosyl-L-methionine (SAM)-dependent reaction. The chain is Phosphomethylpyrimidine synthase from Carboxydothermus hydrogenoformans (strain ATCC BAA-161 / DSM 6008 / Z-2901).